Consider the following 185-residue polypeptide: GTP-binding protein rhb1 (185 aa).

Positions 16, 18, 19, 20, 21, 32, 35, 38, 119, 122, and 150 each coordinate GTP. Ser-20 is a Mg(2+) binding site. Positions 35–43 (YYPTIENTF) match the Effector region motif. Thr-38 provides a ligand contact to Mg(2+). Cys-182 is modified (cysteine methyl ester). Cys-182 carries the S-farnesyl cysteine lipid modification. The propeptide at 183–185 (VIA) is removed in mature form.

The protein belongs to the small GTPase superfamily. Rheb family.

It localises to the cell membrane. It carries out the reaction GTP + H2O = GDP + phosphate + H(+). Its function is as follows. Binds GTP and exhibits intrinsic GTPase activity. Regulates entry into stationary phase when extracellular nitrogen levels are adequate for growth. The polypeptide is GTP-binding protein rhb1 (rhb1) (Schizosaccharomyces pombe (strain 972 / ATCC 24843) (Fission yeast)).